The primary structure comprises 78 residues: Large ribosomal subunit protein bL28 (78 aa).

Belongs to the bacterial ribosomal protein bL28 family.

This is Large ribosomal subunit protein bL28 from Methylococcus capsulatus (strain ATCC 33009 / NCIMB 11132 / Bath).